A 176-amino-acid polypeptide reads, in one-letter code: MSSKDQSRLPHEKGFHISWDQIHRDSRALAWRLDGQGPDEGAWRAVVAITRGGMAPAMIVARELDIRVVDTISVMSYHSGGGKADQRRDAKVLKAPDADMMGDGTGILIVDDLVDSGKTLELVRAQYPNAHFATVYAKPQGEPQVNTFITGVSQDTWIFFPWDMALQYVEPYRGTD.

5-phospho-alpha-D-ribose 1-diphosphate contacts are provided by residues 51–52 (RG), R88, and 111–119 (DDLVDSGKT). R88 contacts GMP. D112 provides a ligand contact to Mg(2+). Guanine contacts are provided by D115 and I158. Xanthine contacts are provided by D115 and I158. GMP-binding positions include 115–119 (DSGKT) and 157–158 (WI).

It belongs to the purine/pyrimidine phosphoribosyltransferase family. XGPT subfamily. Homotetramer. Requires Mg(2+) as cofactor.

It localises to the cell inner membrane. It carries out the reaction GMP + diphosphate = guanine + 5-phospho-alpha-D-ribose 1-diphosphate. It catalyses the reaction XMP + diphosphate = xanthine + 5-phospho-alpha-D-ribose 1-diphosphate. The enzyme catalyses IMP + diphosphate = hypoxanthine + 5-phospho-alpha-D-ribose 1-diphosphate. It participates in purine metabolism; GMP biosynthesis via salvage pathway; GMP from guanine: step 1/1. Its pathway is purine metabolism; XMP biosynthesis via salvage pathway; XMP from xanthine: step 1/1. Purine salvage pathway enzyme that catalyzes the transfer of the ribosyl-5-phosphate group from 5-phospho-alpha-D-ribose 1-diphosphate (PRPP) to the N9 position of the 6-oxopurines guanine and xanthine to form the corresponding ribonucleotides GMP (guanosine 5'-monophosphate) and XMP (xanthosine 5'-monophosphate), with the release of PPi. To a lesser extent, also acts on hypoxanthine. The sequence is that of Xanthine-guanine phosphoribosyltransferase from Roseobacter denitrificans (strain ATCC 33942 / OCh 114) (Erythrobacter sp. (strain OCh 114)).